The chain runs to 251 residues: Hydroxyacylglutathione hydrolase (251 aa).

7 residues coordinate Zn(2+): His-53, His-55, Asp-57, His-58, His-110, Asp-127, and His-165.

Belongs to the metallo-beta-lactamase superfamily. Glyoxalase II family. As to quaternary structure, monomer. Requires Zn(2+) as cofactor.

It carries out the reaction an S-(2-hydroxyacyl)glutathione + H2O = a 2-hydroxy carboxylate + glutathione + H(+). The protein operates within secondary metabolite metabolism; methylglyoxal degradation; (R)-lactate from methylglyoxal: step 2/2. Thiolesterase that catalyzes the hydrolysis of S-D-lactoyl-glutathione to form glutathione and D-lactic acid. The chain is Hydroxyacylglutathione hydrolase from Shigella boydii serotype 18 (strain CDC 3083-94 / BS512).